The following is a 329-amino-acid chain: Fructose-1,6-bisphosphatase class 1 (329 aa).

Residues Glu-84, Asp-103, Leu-105, and Asp-106 each contribute to the Mg(2+) site. Residues 106–109 (DGSS), Asn-196, and Lys-262 each bind substrate. Glu-268 provides a ligand contact to Mg(2+).

The protein belongs to the FBPase class 1 family. As to quaternary structure, homotetramer. Requires Mg(2+) as cofactor.

The protein resides in the cytoplasm. It carries out the reaction beta-D-fructose 1,6-bisphosphate + H2O = beta-D-fructose 6-phosphate + phosphate. It participates in carbohydrate biosynthesis; gluconeogenesis. This Shewanella halifaxensis (strain HAW-EB4) protein is Fructose-1,6-bisphosphatase class 1.